Here is a 155-residue protein sequence, read N- to C-terminus: UPF0178 protein mlr0875 (155 aa).

This sequence belongs to the UPF0178 family.

This chain is UPF0178 protein mlr0875, found in Mesorhizobium japonicum (strain LMG 29417 / CECT 9101 / MAFF 303099) (Mesorhizobium loti (strain MAFF 303099)).